Consider the following 507-residue polypeptide: Putative histone deacetylase 2 (507 aa).

Residues 29 to 342 (RNVAYYYHKD…WALETGVILG (314 aa)) form a histone deacetylase region. The active site involves His-162. A disordered region spans residues 444-507 (EECFVEEDSK…RKDLNIPGIP (64 aa)). Positions 482–501 (SHSDVIEEAKYEDRDRRKDL) are enriched in basic and acidic residues.

It belongs to the histone deacetylase family. HD type 1 subfamily. In terms of assembly, may be a component of a histone deacetylase complex containing saeg-2, saeg-1 and hda-2.

The protein resides in the nucleus. It catalyses the reaction N(6)-acetyl-L-lysyl-[histone] + H2O = L-lysyl-[histone] + acetate. Probably responsible for the deacetylation of lysine residues on the N-terminal part of the core histones (H2A, H2B, H3 and H4). Histone deacetylation gives a tag for epigenetic repression and plays an important role in transcriptional regulation, cell cycle progression and developmental events. Histone deacetylases act via the formation of large multiprotein complexes. As a likely component of a histone deacetylase complex, together with saeg-1 and hda-2, functions downstream of the cAMP-dependent kinase egl-4 to regulate the expression of genes required for egg-laying and forgaging. This Caenorhabditis elegans protein is Putative histone deacetylase 2 (hda-2).